The following is a 190-amino-acid chain: Cysteine dioxygenase (190 aa).

Fe cation contacts are provided by His-78, His-80, and His-132. Residues 85–149 constitute a cross-link (3'-(S-cysteinyl)-tyrosine (Cys-Tyr)); that stretch reads CFVKILDGEL…SNGAVSLHLY (65 aa).

Belongs to the cysteine dioxygenase family. It depends on Fe cation as a cofactor. The thioether cross-link between Cys-85 and Tyr-149 plays a structural role through stabilizing the Fe(2+) ion, and prevents the production of highly damaging free hydroxyl radicals by holding the oxygen radical via hydroxyl hydrogen.

It carries out the reaction L-cysteine + O2 = 3-sulfino-L-alanine + H(+). It functions in the pathway organosulfur biosynthesis; taurine biosynthesis; hypotaurine from L-cysteine: step 1/2. In Caenorhabditis briggsae, this protein is Cysteine dioxygenase (cdo-1).